We begin with the raw amino-acid sequence, 359 residues long: Protein RecA (359 aa).

Position 77-84 (77-84 (GPESSGKT)) interacts with ATP.

This sequence belongs to the RecA family.

Its subcellular location is the cytoplasm. Can catalyze the hydrolysis of ATP in the presence of single-stranded DNA, the ATP-dependent uptake of single-stranded DNA by duplex DNA, and the ATP-dependent hybridization of homologous single-stranded DNAs. It interacts with LexA causing its activation and leading to its autocatalytic cleavage. In Azospirillum lipoferum (strain 4B), this protein is Protein RecA.